The chain runs to 1159 residues: WASH complex subunit 5 (1159 aa).

Belongs to the strumpellin family. As to quaternary structure, component of the WASH complex.

It is found in the early endosome. In terms of biological role, acts at least in part as component of the WASH complex which seems to regulate washc1 nucleation-promoting factor (NPF) activity and is required for its membrane targeting during endosomal sorting. The sequence is that of WASH complex subunit 5 from Xenopus tropicalis (Western clawed frog).